Here is a 509-residue protein sequence, read N- to C-terminus: H/ACA ribonucleoprotein complex subunit DKC1 (509 aa).

Residues Met-1–Glu-24 form a disordered region. Ala-2 bears the N-acetylalanine mark. Positions Ala-2–Pro-21 are nucleolar localization. Over residues Pro-10–Arg-19 the composition is skewed to basic residues. Residues Lys-20, Lys-39, and Lys-43 each participate in a glycyl lysine isopeptide (Lys-Gly) (interchain with G-Cter in SUMO2) cross-link. Asp-125 (nucleophile) is an active-site residue. Residue Lys-191 forms a Glycyl lysine isopeptide (Lys-Gly) (interchain with G-Cter in SUMO2) linkage. One can recognise a PUA domain in the interval Lys-297–Glu-372. A Phosphoserine modification is found at Ser-387. Lys-394 is covalently cross-linked (Glycyl lysine isopeptide (Lys-Gly) (interchain with G-Cter in SUMO2)). A Glycyl lysine isopeptide (Lys-Gly) (interchain with G-Cter in SUMO1); alternate cross-link involves residue Lys-413. Lys-413 participates in a covalent cross-link: Glycyl lysine isopeptide (Lys-Gly) (interchain with G-Cter in SUMO2); alternate. Lys-424 participates in a covalent cross-link: Glycyl lysine isopeptide (Lys-Gly) (interchain with G-Cter in SUMO2). Positions Lys-446 to Glu-509 are nuclear and nucleolar localization. Residues Arg-447 to Glu-509 form a disordered region. Phosphoserine occurs at positions 451, 453, and 455. Thr-458 is modified (phosphothreonine). The segment covering Glu-466–Lys-476 has biased composition (basic residues). At Ser-481 the chain carries Phosphoserine. Position 485 is a phosphothreonine (Thr-485). Residue Ser-508 is modified to Phosphoserine.

This sequence belongs to the pseudouridine synthase TruB family. In terms of assembly, part of the H/ACA small nucleolar ribonucleoprotein (H/ACA snoRNP) complex, which contains NHP2/NOLA2, GAR1/NOLA1, NOP10/NOLA3, and DKC1/NOLA4, which is presumed to be the catalytic subunit. The complex contains a stable core formed by binding of one or two NOP10-DKC1 heterodimers to NHP2; GAR1 subsequently binds to this core via DKC1. The complex binds a box H/ACA small nucleolar RNA (snoRNA), which may target the specific site of modification within the RNA substrate. During assembly, the complex contains NAF1 instead of GAR1/NOLA1. The complex also interacts with TERC, which contains a 3'-terminal domain related to the box H/ACA snoRNAs. Specific interactions with snoRNAs or TERC are mediated by GAR1 and NHP2. Associates with NOLC1/NOPP140. H/ACA snoRNPs interact with the SMN complex, consisting of SMN1 or SMN2, GEMIN2/SIP1, DDX20/GEMIN3, and GEMIN4. This is mediated by interaction between GAR1 and SMN1 or SMN2. The SMN complex may be required for correct assembly of the H/ACA snoRNP complex. Component of the telomerase holoenzyme complex composed of one molecule of TERT, one molecule of WRAP53/TCAB1, two molecules of H/ACA ribonucleoprotein complex subunits DKC1, NOP10, NHP2 and GAR1, and a telomerase RNA template component (TERC). The telomerase holoenzyme complex is associated with TEP1, SMG6/EST1A and POT1. Interacts with SHQ1; this interaction may lead to the stabilization of DKC1, from the time of its synthesis until its association with NOP10, NHP2, and NAF1 at the nascent H/ACA RNA. Interacts with HMBOX1. Interacts with DHX36. As to expression, ubiquitously expressed, with elevated levels in Purkinje cells, the olfactory bulb, and Leydig cells of the testis.

The protein resides in the nucleus. It is found in the nucleolus. It localises to the cajal body. The enzyme catalyses uridine in 5S rRNA = pseudouridine in 5S rRNA. Catalytic subunit of H/ACA small nucleolar ribonucleoprotein (H/ACA snoRNP) complex, which catalyzes pseudouridylation of rRNA. This involves the isomerization of uridine such that the ribose is subsequently attached to C5, instead of the normal N1. Each rRNA can contain up to 100 pseudouridine ('psi') residues, which may serve to stabilize the conformation of rRNAs. Required for ribosome biogenesis and telomere maintenance. Also required for correct processing or intranuclear trafficking of TERC, the RNA component of the telomerase reverse transcriptase (TERT) holoenzyme. The sequence is that of H/ACA ribonucleoprotein complex subunit DKC1 (Dkc1) from Mus musculus (Mouse).